We begin with the raw amino-acid sequence, 442 residues long: 5'-deoxyadenosine deaminase (442 aa).

The Zn(2+) site is built by His72 and His74. Positions 101 and 193 each coordinate substrate. His220 provides a ligand contact to Zn(2+). Substrate-binding residues include Glu223 and Asp309. Asp309 is a binding site for Zn(2+).

It belongs to the metallo-dependent hydrolases superfamily. MTA/SAH deaminase family. As to quaternary structure, homotetramer. Zn(2+) is required as a cofactor.

It carries out the reaction 5'-deoxyadenosine + H2O + H(+) = 5'-deoxyinosine + NH4(+). The catalysed reaction is S-adenosyl-L-homocysteine + H2O + H(+) = S-inosyl-L-homocysteine + NH4(+). It catalyses the reaction S-methyl-5'-thioadenosine + H2O + H(+) = S-methyl-5'-thioinosine + NH4(+). The enzyme catalyses adenosine + H2O + H(+) = inosine + NH4(+). It participates in amino-acid biosynthesis; S-adenosyl-L-methionine biosynthesis. Catalyzes the deamination of three SAM-derived enzymatic products, namely 5'-deoxyadenosine, S-adenosyl-L-homocysteine, and 5'-methylthioadenosine, to produce the inosine analogs. Can also deaminate adenosine. The preferred substrate for this enzyme is 5'-deoxyadenosine, but all these substrates are efficiently deaminated. Likely functions in a S-adenosyl-L-methionine (SAM) recycling pathway from S-adenosyl-L-homocysteine (SAH) produced from SAM-dependent methylation reactions. May also be involved in the recycling of 5'-deoxyadenosine, whereupon the 5'-deoxyribose moiety of 5'-deoxyinosine is further metabolized to deoxyhexoses used for the biosynthesis of aromatic amino acids in methanogens. This is 5'-deoxyadenosine deaminase from Methanoregula boonei (strain DSM 21154 / JCM 14090 / 6A8).